Reading from the N-terminus, the 159-residue chain is V-type proton ATPase 16 kDa proteolipid subunit c (159 aa).

Over Met-1–Tyr-12 the chain is Lumenal. Residues Gly-13–Gly-35 traverse the membrane as a helical segment. Over Thr-36 to Ser-57 the chain is Cytoplasmic. The chain crosses the membrane as a helical span at residues Ile-58–Ile-78. At Ala-79–His-96 the chain is on the lumenal side. The helical transmembrane segment at Leu-97–Gly-118 threads the bilayer. The Cytoplasmic segment spans residues Asp-119–Arg-130. A helical transmembrane segment spans residues Leu-131 to Leu-156. The Lumenal portion of the chain corresponds to Tyr-157–Lys-159.

It belongs to the V-ATPase proteolipid subunit family. V-ATPase is a heteromultimeric enzyme made up of two complexes: the ATP-hydrolytic V1 complex and the proton translocation V0 complex. The V1 complex consists of three catalytic AB heterodimers that form a heterohexamer, three peripheral stalks each consisting of EG heterodimers, one central rotor including subunits D and F, and the regulatory subunits C and H. The proton translocation complex V0 consists of the proton transport subunit a, a ring of proteolipid subunits c9c'', rotary subunit d, subunits e and f, and the accessory subunits VhaAC45 and ATP6AP2. In terms of tissue distribution, expressed in the larval middle mid-gut; predominantly in the copper cell region with lower levels of expression in the interstitial cells.

The protein localises to the membrane. In terms of biological role, proton-conducting pore forming subunit of the V0 complex of vacuolar(H+)-ATPase (V-ATPase), a multisubunit enzyme composed of a peripheral complex (V1) that hydrolyzes ATP and a membrane integral complex (V0) that translocates protons. V-ATPase is responsible for acidifying and maintaining the pH of intracellular compartments and in some cell types, is targeted to the plasma membrane, where it is responsible for acidifying the extracellular environment. In enterocytes, acts as part of a pHCl-2 sensory pathway which mediates Tor-dependent larval growth and metabolism in response to zinc availability. Likely acts in maintaining enterocyte lysosomal acidification which consequently promotes Tor activation at the lysosome membrane. The polypeptide is V-type proton ATPase 16 kDa proteolipid subunit c (Vha16-1) (Drosophila melanogaster (Fruit fly)).